The following is a 158-amino-acid chain: SsrA-binding protein (158 aa).

Residues 130 to 158 (KGKKNHDKREAQAKRDWSRQKQRLLKDHG) are disordered. A compositionally biased stretch (basic and acidic residues) spans 136 to 158 (DKREAQAKRDWSRQKQRLLKDHG).

The protein belongs to the SmpB family.

It localises to the cytoplasm. In terms of biological role, required for rescue of stalled ribosomes mediated by trans-translation. Binds to transfer-messenger RNA (tmRNA), required for stable association of tmRNA with ribosomes. tmRNA and SmpB together mimic tRNA shape, replacing the anticodon stem-loop with SmpB. tmRNA is encoded by the ssrA gene; the 2 termini fold to resemble tRNA(Ala) and it encodes a 'tag peptide', a short internal open reading frame. During trans-translation Ala-aminoacylated tmRNA acts like a tRNA, entering the A-site of stalled ribosomes, displacing the stalled mRNA. The ribosome then switches to translate the ORF on the tmRNA; the nascent peptide is terminated with the 'tag peptide' encoded by the tmRNA and targeted for degradation. The ribosome is freed to recommence translation, which seems to be the essential function of trans-translation. This is SsrA-binding protein from Ruegeria sp. (strain TM1040) (Silicibacter sp.).